A 66-amino-acid chain; its full sequence is Surface composition regulator (66 aa).

It belongs to the GlgS family.

Its function is as follows. Major determinant of cell surface composition. Negatively regulates motility, adhesion and synthesis of biofilm exopolysaccharides. This Escherichia coli O127:H6 (strain E2348/69 / EPEC) protein is Surface composition regulator.